A 213-amino-acid polypeptide reads, in one-letter code: Orotate phosphoribosyltransferase (213 aa).

Residue lysine 26 participates in 5-phospho-alpha-D-ribose 1-diphosphate binding. An orotate-binding site is contributed by 34-35; the sequence is FF. Residues 72-73, arginine 99, lysine 100, lysine 103, histidine 105, and 124-132 each bind 5-phospho-alpha-D-ribose 1-diphosphate; these read YK and DDVITAGTS. Threonine 128 and arginine 156 together coordinate orotate.

Belongs to the purine/pyrimidine phosphoribosyltransferase family. PyrE subfamily. As to quaternary structure, homodimer. It depends on Mg(2+) as a cofactor.

The catalysed reaction is orotidine 5'-phosphate + diphosphate = orotate + 5-phospho-alpha-D-ribose 1-diphosphate. Its pathway is pyrimidine metabolism; UMP biosynthesis via de novo pathway; UMP from orotate: step 1/2. Catalyzes the transfer of a ribosyl phosphate group from 5-phosphoribose 1-diphosphate to orotate, leading to the formation of orotidine monophosphate (OMP). This Methylococcus capsulatus (strain ATCC 33009 / NCIMB 11132 / Bath) protein is Orotate phosphoribosyltransferase.